A 100-amino-acid polypeptide reads, in one-letter code: Movement protein TGBp3 (100 aa).

Over Met-1–Asp-41 the chain is Lumenal. Residues Leu-42–Pro-59 traverse the membrane as a helical segment. Topologically, residues Lys-60–Leu-100 are cytoplasmic.

It belongs to the Tymovirales TGBp3 protein family.

It localises to the host endoplasmic reticulum membrane. Its function is as follows. Plays a role in viral cell-to-cell propagation, by facilitating genome transport to neighboring plant cells through plasmosdesmata. May induce the formation of granular vesicles derived from the Endoplasmic reticulum, which align on actin filaments. The protein is Movement protein TGBp3 of Narcissus mosaic virus (NMV).